The chain runs to 1527 residues: Lysophospholipase nte1 (1527 aa).

Topologically, residues 1–73 are cytoplasmic; sequence MADSGASVPS…SPPTPTTMVG (73 aa). Residues 74-94 traverse the membrane as a helical segment; sequence WIGWVFSLVFQTIPSVLYWVI. The Lumenal segment spans residues 95-116; sequence TFSTITLPTWLFTLFSMSLTFT. Residues 117-137 traverse the membrane as a helical segment; the sequence is MNFTTLLLIVLGLVSTVSWFI. The Cytoplasmic portion of the chain corresponds to 138-1527; that stretch reads RYRFLNMYSR…RTLAPRRASI (1390 aa). Positions 299-310 are enriched in low complexity; the sequence is GSSSSMSSVQPS. Disordered stretches follow at residues 299-387, 567-596, and 765-785; these read GSSS…RRKS, DQFATTPRLHSPLTEKERSPLRRSSLQRKD, and ATSRGATAAAPINESKRKKPS. The segment covering 364–377 has biased composition (polar residues); sequence RASSYHPNGQSTAS. A nucleoside 3',5'-cyclic phosphate-binding positions include 682–809 and 846–966; these read GGTS…SYRS and RLTG…IAQR. The PNPLA domain maps to 1224-1388; that stretch reads LVLGGGGARG…IDNLTVAHMK (165 aa). The short motif at 1228-1233 is the GXGXXG element; the sequence is GGGARG. Positions 1255-1259 match the GXSXG motif; it reads GTSIG. The Nucleophile role is filled by Ser-1257. Asp-1375 functions as the Proton acceptor in the catalytic mechanism. The DGA/G motif lies at 1375–1377; that stretch reads DGG. The tract at residues 1504-1527 is disordered; it reads LPLPEENEEKKKLQRTLAPRRASI.

The protein belongs to the NTE family.

It localises to the endoplasmic reticulum membrane. The enzyme catalyses a 1-acyl-sn-glycero-3-phosphocholine + H2O = sn-glycerol 3-phosphocholine + a fatty acid + H(+). Inhibited by organophosphorus esters. Intracellular phospholipase B that catalyzes the double deacylation of phosphatidylcholine (PC) to glycerophosphocholine (GroPCho). Plays an important role in membrane lipid homeostasis. Responsible for the rapid PC turnover in response to inositol, elevated temperatures, or when choline is present in the growth medium. The sequence is that of Lysophospholipase nte1 (nte1) from Emericella nidulans (strain FGSC A4 / ATCC 38163 / CBS 112.46 / NRRL 194 / M139) (Aspergillus nidulans).